Reading from the N-terminus, the 261-residue chain is Thioesterase frbD (261 aa).

The protein belongs to the AMT4 thioesterase family.

Its pathway is antifungal biosynthesis. Its function is as follows. Thioesterase; part of the gene cluster that mediates the biosynthesis of the antifungal antibiotic FR901469, an inhibitor of beta-1,3-glucansynthase, exerting antifungal activity against the pathogenes Candida albicans and Aspergillus fumigatus. FR901469 is a cyclic depsipeptide containing 12 amino acid residues and a fatty acid chain. The NRPS frbI contains 12 modules responsible for the formation of the depsipeptide backbone which is denoted as Acyl-Thr-Ala-Tyr-Val-4OHPro-Thr-Thr-3OHPro-threo3OHGln-Gly-Thr-Orn-OH (C71H116N14O23). The PKS frbB is probably involved in the production of the hydrocarbon chain, and the acyl-CoA ligase frbC might be involved in the transport of the chain to the peptide ptoduct of frbI. Because FR901469 contains 3 hydroxylated amino acid residues, the 3 oxygenases frbA, frbH, and frbJ might be participating in amino acid hydroxylation. As no thioesterase domains were detected in frbI or frbB, the thioesterases frbD and frbE may instead release and cyclize the products of the NRPS and PKS, respectively. In Dothideomycetidae sp. (strain 11243) (Fungal sp. (strain No.11243)), this protein is Thioesterase frbD.